A 262-amino-acid chain; its full sequence is MNKSLLSELIIDIGNTSIAFALFEDNKVNLFIKMKTNLMLSYDEVYSFFKENFDFNVNQVFISSVVPVLNKIFENIIFSFFKIKPLFISFDLNYDLTFNPYGSGKFLLGSDVFANLVAAIENYSLENVLVADLGTACTIFAVSRQDGILGGLINSGPLINFNSLLDNAYLLNKFPISTPTNLLERTTSGSVNSGLFYQYKYLIEGVYHDIKKIYKRGFNLIITGGNANLLLPLIEVEFIFNIHLTVEGIRILGNSIVVKFVN.

Residue 12 to 19 (DIGNTSIA) coordinates ATP. Substrate-binding positions include Y94 and 109 to 112 (GSDV). D111 acts as the Proton acceptor in catalysis. Residue D132 coordinates K(+). Position 135 (T135) interacts with ATP. T187 serves as a coordination point for substrate.

It belongs to the type III pantothenate kinase family. As to quaternary structure, homodimer. The cofactor is NH4(+). K(+) is required as a cofactor.

The protein localises to the cytoplasm. The enzyme catalyses (R)-pantothenate + ATP = (R)-4'-phosphopantothenate + ADP + H(+). It participates in cofactor biosynthesis; coenzyme A biosynthesis; CoA from (R)-pantothenate: step 1/5. In terms of biological role, catalyzes the phosphorylation of pantothenate (Pan), the first step in CoA biosynthesis. The chain is Type III pantothenate kinase from Borrelia garinii subsp. bavariensis (strain ATCC BAA-2496 / DSM 23469 / PBi) (Borreliella bavariensis).